We begin with the raw amino-acid sequence, 913 residues long: MFAPLLKKLFGSKNEREVKRMLKAVQSVNALEEQMLSLSDEQLRSKTEEFKARLEKGETLDQILPEAFAVCREAGKRVMGMRHFDVQLIGGMTLHEGRIAEMRTGEGKTLVATLAVYLNALAGKGVHVVTVNDYLARRDANWMRPLYEFLGLSVGIVTPFQPPEEKRAAYASDITYGTNNEFGFDYLRDNMAFSLQEKNQRELNFAVIDEVDSILIDEARTPLIISGQAEDSSKLYQQINLLIPRLTQHIEEEEGVVTQEGHFSIDEKTRQVELNEQGHQYIEELLTQAGLLAEGESLYSAHNLGLLTHVYSGLRAHKLFHRNVEYIVQNNQVLLIDEHTGRTMPGRRLSEGLHQAIEAKEGLQIQPESQTLASTTFQNYFRLYKKLAGMTGTADTEAFEFQQIYSLPVVVIPTNKPLARKDFNDLVYLTQEEKFAAIIADIKECRNQGRPVLVGTATIESSEYVSRLLEAEGFEHKVLNAKHHDKEAEIIAQAGRPGAVTIATNMAGRGTDILLGGNWEVEVAALENATEEQIAQIKADWQKRHQQVLEAGGLHVIASERHESRRIDNQLRGRAGRQGDPGSSRFYLSLEDSLMRIFASDRVKNFMKALGMESGEAIEHRMVTNAIEKAQRKVEGRNFDMRKQLLEYDDVANEQRKVIYHMRNSLLAADEIGQTIAEFRQEALDAAISAHIPPQSLPEQWDIPGLEAVLYSDFGTRLPIQQWLDEDEKLYEETLREKILQALLDAYNEKEDMAGAEALRSFEKQIVLRVLDDLWKDHLSTMDHLRHGIHLRGYAQKNPKQEYKRESFTLFQDLLESIKRDSIRVLSHVQVRREDPAEEEARLRHEAEELAKRMQFQHAEVSALDQPEEEPAEVEGQPDVAVASVRTEPKIGRNEPCPCGSGKKYKHCHGQVQ.

ATP is bound by residues Q87, 105–109 (GEGKT), and D512. The disordered stretch occupies residues 864 to 913 (LDQPEEEPAEVEGQPDVAVASVRTEPKIGRNEPCPCGSGKKYKHCHGQVQ). C897, C899, C908, and H909 together coordinate Zn(2+). The span at 903 to 913 (KKYKHCHGQVQ) shows a compositional bias: basic residues.

The protein belongs to the SecA family. As to quaternary structure, monomer and homodimer. Part of the essential Sec protein translocation apparatus which comprises SecA, SecYEG and auxiliary proteins SecDF-YajC and YidC. Zn(2+) serves as cofactor.

It localises to the cell inner membrane. The protein resides in the cytoplasm. The enzyme catalyses ATP + H2O + cellular proteinSide 1 = ADP + phosphate + cellular proteinSide 2.. Functionally, part of the Sec protein translocase complex. Interacts with the SecYEG preprotein conducting channel. Has a central role in coupling the hydrolysis of ATP to the transfer of proteins into and across the cell membrane, serving both as a receptor for the preprotein-SecB complex and as an ATP-driven molecular motor driving the stepwise translocation of polypeptide chains across the membrane. This chain is Protein translocase subunit SecA, found in Stutzerimonas stutzeri (strain A1501) (Pseudomonas stutzeri).